We begin with the raw amino-acid sequence, 432 residues long: Trigger factor (432 aa).

In terms of domain architecture, PPIase FKBP-type spans 161–246 (DDRVTIDFVG…LKKIENMVLP (86 aa)).

Belongs to the FKBP-type PPIase family. Tig subfamily.

The protein resides in the cytoplasm. It carries out the reaction [protein]-peptidylproline (omega=180) = [protein]-peptidylproline (omega=0). In terms of biological role, involved in protein export. Acts as a chaperone by maintaining the newly synthesized protein in an open conformation. Functions as a peptidyl-prolyl cis-trans isomerase. This is Trigger factor from Haemophilus influenzae (strain 86-028NP).